Here is a 363-residue protein sequence, read N- to C-terminus: 3-dehydroquinate synthase (363 aa).

NAD(+) contacts are provided by residues 75–80, 109–113, 133–134, Lys-146, Lys-155, and 173–176; these read DAEEGK, GAVTD, TS, and TLST. Zn(2+) contacts are provided by Glu-188, His-251, and His-267.

The protein belongs to the sugar phosphate cyclases superfamily. Dehydroquinate synthase family. Requires Co(2+) as cofactor. Zn(2+) is required as a cofactor. NAD(+) serves as cofactor.

Its subcellular location is the cytoplasm. It carries out the reaction 7-phospho-2-dehydro-3-deoxy-D-arabino-heptonate = 3-dehydroquinate + phosphate. The protein operates within metabolic intermediate biosynthesis; chorismate biosynthesis; chorismate from D-erythrose 4-phosphate and phosphoenolpyruvate: step 2/7. In terms of biological role, catalyzes the conversion of 3-deoxy-D-arabino-heptulosonate 7-phosphate (DAHP) to dehydroquinate (DHQ). This Arthrobacter sp. (strain FB24) protein is 3-dehydroquinate synthase.